Here is a 142-residue protein sequence, read N- to C-terminus: Matrix protein (142 aa).

In terms of assembly, homooligomer. Forms homotetramers. Interacts with phosphoprotein P. Binds to ssRNA.

The protein resides in the virion. The protein localises to the host cytoplasm. Its subcellular location is the host cell membrane. It is found in the host nucleus. In terms of biological role, plays a crucial role in virion assembly and budding. This Borna disease virus (strain V) (BDV) protein is Matrix protein (M).